A 409-amino-acid polypeptide reads, in one-letter code: Translation initiation factor 2 subunit gamma (409 aa).

The tr-type G domain maps to 7–203 (QPEVNIGLVG…TIESEIPTPD (197 aa)). Positions 16-23 (GHVDHGKT) are G1. Mg(2+) contacts are provided by aspartate 19, threonine 23, glycine 44, and serine 46. 19-24 (DHGKTT) contributes to the GTP binding site. Residues 44-48 (GISIR) are G2. A G3 region spans residues 90–93 (DAPG). GTP contacts are provided by residues 146 to 149 (NKID) and 181 to 183 (SAQ). Positions 146–149 (NKID) are G4. The tract at residues 181-183 (SAQ) is G5.

Belongs to the TRAFAC class translation factor GTPase superfamily. Classic translation factor GTPase family. EIF2G subfamily. In terms of assembly, heterotrimer composed of an alpha, a beta and a gamma chain. It depends on Mg(2+) as a cofactor.

It catalyses the reaction GTP + H2O = GDP + phosphate + H(+). EIF-2 functions in the early steps of protein synthesis by forming a ternary complex with GTP and initiator tRNA. In Natronomonas pharaonis (strain ATCC 35678 / DSM 2160 / CIP 103997 / JCM 8858 / NBRC 14720 / NCIMB 2260 / Gabara) (Halobacterium pharaonis), this protein is Translation initiation factor 2 subunit gamma.